A 646-amino-acid polypeptide reads, in one-letter code: Protein kinase YegI (646 aa).

A Protein kinase domain is found at Val-13 to Leu-300. Residues Leu-19–Val-27 and Lys-39 contribute to the ATP site. The Proton acceptor role is filled by Asp-141.

Autophosphorylated.

Functionally, probable serine/threonine kinase. This Escherichia coli O157:H7 protein is Protein kinase YegI (yegI).